The primary structure comprises 84 residues: Small ribosomal subunit protein uS17 (84 aa).

This sequence belongs to the universal ribosomal protein uS17 family. In terms of assembly, part of the 30S ribosomal subunit.

In terms of biological role, one of the primary rRNA binding proteins, it binds specifically to the 5'-end of 16S ribosomal RNA. This is Small ribosomal subunit protein uS17 from Aliivibrio fischeri (strain ATCC 700601 / ES114) (Vibrio fischeri).